Consider the following 982-residue polypeptide: Glutamate [NMDA] receptor subunit 1 (982 aa).

The N-terminal stretch at 1-22 (MRVAFIYRWLLCGAAIVNVLVA) is a signal peptide. Over 23 to 568 (QRHTASDNPS…TLVSFLQPFS (546 aa)) the chain is Extracellular. N-linked (GlcNAc...) asparagine glycosylation is found at Asn253, Asn309, Asn340, Asn392, Asn449, Asn476, and Asn496. Glycine-binding positions include 525–527 (PLT) and Arg532. A helical transmembrane segment spans residues 569–589 (NTLWILVMVSVHVVALVLYLL). Over 590–646 (DRFSPFGRFKLSHSDSNEEKALNLSSAVWFAWGVLLNSGIGEGTPRSFSARVLGMVW) the chain is Cytoplasmic. Residues 647-667 (AGFAMIIVASYTANLAAFLVL) traverse the membrane as a helical segment. Over 668–826 (ERPKTKLSGI…KTPNTLGLKN (159 aa)) the chain is Extracellular. The N-linked (GlcNAc...) asparagine glycan is linked to Asn688. Glycine contacts are provided by Ser698 and Asp742. The chain crosses the membrane as a helical span at residues 827-847 (MAGVFILVGVGIAGGVGLIII). The Cytoplasmic portion of the chain corresponds to 848–982 (EVIYKKHQVK…YTSDVSHLVV (135 aa)). A disordered region spans residues 948-982 (LTASQLGLGKTRPQQNPLPPRYSPGYTSDVSHLVV). Residues 972–982 (GYTSDVSHLVV) show a composition bias toward polar residues.

Belongs to the glutamate-gated ion channel (TC 1.A.10.1) family. As to quaternary structure, forms a heteromeric NMDA channel with Nmdar2.

The protein localises to the cell membrane. The protein resides in the postsynaptic cell membrane. Its subcellular location is the postsynaptic density. Functionally, NMDA receptor subtype of glutamate-gated ion channels with high calcium permeability and voltage-dependent sensitivity to magnesium. Mediated by glycine. This protein plays a key role in synaptic plasticity, synaptogenesis, excitotoxicity, memory acquisition and learning. It mediates neuronal functions in glutamate neurotransmission. Is involved in the cell surface targeting of NMDA receptors. Plays a role in associative learning and in long-term memory consolidation. This is Glutamate [NMDA] receptor subunit 1 from Drosophila grimshawi (Hawaiian fruit fly).